Reading from the N-terminus, the 98-residue chain is Large ribosomal subunit protein uL23 (98 aa).

The protein belongs to the universal ribosomal protein uL23 family. In terms of assembly, part of the 50S ribosomal subunit. Contacts protein L29, and trigger factor when it is bound to the ribosome.

In terms of biological role, one of the early assembly proteins it binds 23S rRNA. One of the proteins that surrounds the polypeptide exit tunnel on the outside of the ribosome. Forms the main docking site for trigger factor binding to the ribosome. This is Large ribosomal subunit protein uL23 from Koribacter versatilis (strain Ellin345).